We begin with the raw amino-acid sequence, 528 residues long: Na(+)/H(+) antiporter NhaB (528 aa).

10 helical membrane-spanning segments follow: residues 11-31 (VNFL…FLVI), 67-87 (PGGL…SQVL), 98-118 (LLLI…LFVF), 140-160 (AFLS…AVGI), 240-260 (FFIR…LTCV), 311-331 (LVAG…SVII), 350-370 (EEAL…GVII), 391-411 (LVVF…VFVG), 449-469 (ATPN…APLI), and 476-496 (MVIM…VTIE).

The protein belongs to the NhaB Na(+)/H(+) (TC 2.A.34) antiporter family.

The protein resides in the cell inner membrane. The enzyme catalyses 2 Na(+)(in) + 3 H(+)(out) = 2 Na(+)(out) + 3 H(+)(in). Its function is as follows. Na(+)/H(+) antiporter that extrudes sodium in exchange for external protons. The sequence is that of Na(+)/H(+) antiporter NhaB from Shewanella denitrificans (strain OS217 / ATCC BAA-1090 / DSM 15013).